Reading from the N-terminus, the 168-residue chain is MIMIKIGQGIDVHAFHNNGQQQQYVVLAGVPIDHTHSLLAHSDGDVVLHALADALLGALALGDIGQHFPDTDAANAGLDSRVLLRYVYGKVLAAGYILGNADITVMCERPKLAPHNLAMRANIASDLQTDVSNISVKATTTEKLGFTGRQEGIMANAVVLLVPNASGV.

Residues D11 and H13 each coordinate a divalent metal cation. Residues 11 to 13 (DVH) and 41 to 42 (HS) each bind 4-CDP-2-C-methyl-D-erythritol 2-phosphate. H49 contributes to the a divalent metal cation binding site. Residues 63 to 65 (DIG), 68 to 72 (FPDTD), 139 to 142 (TTTE), F146, and R149 contribute to the 4-CDP-2-C-methyl-D-erythritol 2-phosphate site.

Belongs to the IspF family. In terms of assembly, homotrimer. A divalent metal cation serves as cofactor.

It catalyses the reaction 4-CDP-2-C-methyl-D-erythritol 2-phosphate = 2-C-methyl-D-erythritol 2,4-cyclic diphosphate + CMP. It participates in isoprenoid biosynthesis; isopentenyl diphosphate biosynthesis via DXP pathway; isopentenyl diphosphate from 1-deoxy-D-xylulose 5-phosphate: step 4/6. In terms of biological role, involved in the biosynthesis of isopentenyl diphosphate (IPP) and dimethylallyl diphosphate (DMAPP), two major building blocks of isoprenoid compounds. Catalyzes the conversion of 4-diphosphocytidyl-2-C-methyl-D-erythritol 2-phosphate (CDP-ME2P) to 2-C-methyl-D-erythritol 2,4-cyclodiphosphate (ME-CPP) with a corresponding release of cytidine 5-monophosphate (CMP). The chain is 2-C-methyl-D-erythritol 2,4-cyclodiphosphate synthase from Psychrobacter cryohalolentis (strain ATCC BAA-1226 / DSM 17306 / VKM B-2378 / K5).